The chain runs to 139 residues: MRIMGLDVGSKTVGVAISDPLGFTAQGLEIIKIDEEKAEFGFTRLEELVKQYQVEQFVIGLPKNMNNTNGPRVDASITYGNHIEHLFGLPVHYQDERLTTVEAKRMLIEQADISRGKRKKVIDKLAAQLILQNYLNRNF.

It belongs to the YqgF nuclease family.

It localises to the cytoplasm. Functionally, could be a nuclease involved in processing of the 5'-end of pre-16S rRNA. The polypeptide is Putative pre-16S rRNA nuclease (Streptococcus pyogenes serotype M1).